The following is a 72-amino-acid chain: Mitotic-spindle organizing protein 1 (72 aa).

The protein belongs to the MOZART1 family. As to quaternary structure, part of the gamma-tubulin complex.

Its subcellular location is the cytoplasm. It localises to the cytoskeleton. The protein resides in the microtubule organizing center. It is found in the centrosome. The protein localises to the spindle. Functionally, required for gamma-tubulin complex recruitment to the centrosome. The protein is Mitotic-spindle organizing protein 1 (mzt1) of Xenopus tropicalis (Western clawed frog).